The following is a 319-amino-acid chain: Ankyrin repeat domain-containing protein 1 (319 aa).

Positions 55–89 (LGEEQRKSEKVREAELKKKKLEQRSKLENLEDLEI) form a coiled coil. ANK repeat units follow at residues 152–181 (YKRT…QIEF), 185–214 (LEST…KISA), 218–247 (LLST…DLNA), 251–280 (EGDT…DLNV), and 284–315 (AGKT…KNSR).

Interacts with TTN/titin. Interacts with YBX1. In terms of tissue distribution, expressed in heart, cardiac muscle.

The protein localises to the nucleus. Its function is as follows. May play an important role in endothelial cell activation. May act as a nuclear transcription factor that negatively regulates the expression of cardiac genes. This Rattus norvegicus (Rat) protein is Ankyrin repeat domain-containing protein 1 (Ankrd1).